We begin with the raw amino-acid sequence, 600 residues long: DDB1- and CUL4-associated factor 8-like protein 1 (600 aa).

A disordered region spans residues 1–122 (MSHQEGSTGG…EEEQPRMCPR (122 aa)). 2 stretches are compositionally biased toward acidic residues: residues 74 to 83 (SSSEDVELES) and 96 to 115 (EETE…EEEE). 7 WD repeats span residues 194 to 233 (SHAG…PVLN), 237 to 278 (GHDI…YCEN), 284 to 324 (KHRG…PASK), 332 to 372 (DKKV…KKEN), 388 to 427 (DFPT…GAQY), 435 to 475 (RNND…IIQF), and 479 to 518 (DRGD…ATEL). The interval 562-600 (PGWRDHGAEFPDEEELDESSSTSDTSEEEGQDRVQCIPS) is disordered.

It belongs to the WD repeat DCAF8 family.

The polypeptide is DDB1- and CUL4-associated factor 8-like protein 1 (DCAF8L1) (Homo sapiens (Human)).